Consider the following 384-residue polypeptide: 1-deoxy-D-xylulose 5-phosphate reductoisomerase (384 aa).

7 residues coordinate NADPH: T10, G11, S12, I13, R37, N38, and N124. Residue K125 coordinates 1-deoxy-D-xylulose 5-phosphate. Residue E126 coordinates NADPH. A Mn(2+)-binding site is contributed by D150. 1-deoxy-D-xylulose 5-phosphate-binding residues include S151, E152, S176, and H199. Mn(2+) is bound at residue E152. G205 contacts NADPH. Residues S212, N217, K218, and E221 each contribute to the 1-deoxy-D-xylulose 5-phosphate site. Position 221 (E221) interacts with Mn(2+).

Belongs to the DXR family. The cofactor is Mg(2+). Mn(2+) serves as cofactor.

The catalysed reaction is 2-C-methyl-D-erythritol 4-phosphate + NADP(+) = 1-deoxy-D-xylulose 5-phosphate + NADPH + H(+). It participates in isoprenoid biosynthesis; isopentenyl diphosphate biosynthesis via DXP pathway; isopentenyl diphosphate from 1-deoxy-D-xylulose 5-phosphate: step 1/6. Functionally, catalyzes the NADPH-dependent rearrangement and reduction of 1-deoxy-D-xylulose-5-phosphate (DXP) to 2-C-methyl-D-erythritol 4-phosphate (MEP). The polypeptide is 1-deoxy-D-xylulose 5-phosphate reductoisomerase (Clostridium perfringens (strain SM101 / Type A)).